Here is a 258-residue protein sequence, read N- to C-terminus: Indole-3-glycerol phosphate synthase (258 aa).

This sequence belongs to the TrpC family.

It catalyses the reaction 1-(2-carboxyphenylamino)-1-deoxy-D-ribulose 5-phosphate + H(+) = (1S,2R)-1-C-(indol-3-yl)glycerol 3-phosphate + CO2 + H2O. The protein operates within amino-acid biosynthesis; L-tryptophan biosynthesis; L-tryptophan from chorismate: step 4/5. The polypeptide is Indole-3-glycerol phosphate synthase (Chlorobium limicola (strain DSM 245 / NBRC 103803 / 6330)).